Consider the following 400-residue polypeptide: S-adenosylmethionine synthase (400 aa).

136–141 is an ATP binding site; that stretch reads GQGSVD.

Belongs to the AdoMet synthase 2 family. It depends on Mg(2+) as a cofactor.

The catalysed reaction is L-methionine + ATP + H2O = S-adenosyl-L-methionine + phosphate + diphosphate. It functions in the pathway amino-acid biosynthesis; S-adenosyl-L-methionine biosynthesis; S-adenosyl-L-methionine from L-methionine: step 1/1. In terms of biological role, catalyzes the formation of S-adenosylmethionine from methionine and ATP. The chain is S-adenosylmethionine synthase from Thermoplasma volcanium (strain ATCC 51530 / DSM 4299 / JCM 9571 / NBRC 15438 / GSS1).